Here is a 441-residue protein sequence, read N- to C-terminus: Mitochondrial distribution and morphology protein 12 (441 aa).

One can recognise an SMP-LTD domain in the interval 1–441 (MSIDIDWERA…VYPSFWTFLV (441 aa)). The interval 180-289 (TPLRAVTRGN…SGTPPRRMRE (110 aa)) is disordered. 2 stretches are compositionally biased toward polar residues: residues 226–245 (SRPS…SVST) and 253–263 (SSQTVLANNPG).

The protein belongs to the MDM12 family. Component of the ER-mitochondria encounter structure (ERMES) or MDM complex, composed of MMM1, MDM10, MDM12 and MDM34. An MMM1 homodimer associates with one molecule of MDM12 on each side in a pairwise head-to-tail manner, and the SMP-LTD domains of MMM1 and MDM12 generate a continuous hydrophobic tunnel for phospholipid trafficking.

Its subcellular location is the mitochondrion outer membrane. It localises to the endoplasmic reticulum membrane. In terms of biological role, component of the ERMES/MDM complex, which serves as a molecular tether to connect the endoplasmic reticulum (ER) and mitochondria. Components of this complex are involved in the control of mitochondrial shape and protein biogenesis, and function in nonvesicular lipid trafficking between the ER and mitochondria. MDM12 is required for the interaction of the ER-resident membrane protein MMM1 and the outer mitochondrial membrane-resident beta-barrel protein MDM10. The MDM12-MMM1 subcomplex functions in the major beta-barrel assembly pathway that is responsible for biogenesis of all mitochondrial outer membrane beta-barrel proteins, and acts in a late step after the SAM complex. The MDM10-MDM12-MMM1 subcomplex further acts in the TOM40-specific pathway after the action of the MDM12-MMM1 complex. Essential for establishing and maintaining the structure of mitochondria and maintenance of mtDNA nucleoids. In Paracoccidioides brasiliensis (strain Pb18), this protein is Mitochondrial distribution and morphology protein 12.